Consider the following 295-residue polypeptide: Tyrosine recombinase XerD (295 aa).

A Core-binding (CB) domain is found at 1–85; the sequence is METIIEEYLR…TIRSFHQFAI (85 aa). A Tyr recombinase domain is found at 106–289; that stretch reads KLPDVLNVDE…SKSQIRKMYN (184 aa). Active-site residues include R146, K170, H241, R244, and H267. Residue Y276 is the O-(3'-phospho-DNA)-tyrosine intermediate of the active site.

The protein belongs to the 'phage' integrase family. XerD subfamily. In terms of assembly, forms a cyclic heterotetrameric complex composed of two molecules of XerC and two molecules of XerD.

The protein localises to the cytoplasm. Site-specific tyrosine recombinase, which acts by catalyzing the cutting and rejoining of the recombining DNA molecules. The XerC-XerD complex is essential to convert dimers of the bacterial chromosome into monomers to permit their segregation at cell division. It also contributes to the segregational stability of plasmids. The chain is Tyrosine recombinase XerD from Staphylococcus aureus (strain COL).